Here is a 630-residue protein sequence, read N- to C-terminus: 1-deoxy-D-xylulose-5-phosphate synthase (630 aa).

Thiamine diphosphate-binding positions include His-87 and 128-130 (GHS). Asp-159 provides a ligand contact to Mg(2+). Thiamine diphosphate contacts are provided by residues 160-161 (GA), Asn-188, Phe-295, and Glu-377. Residue Asn-188 participates in Mg(2+) binding.

This sequence belongs to the transketolase family. DXPS subfamily. As to quaternary structure, homodimer. It depends on Mg(2+) as a cofactor. Thiamine diphosphate is required as a cofactor.

It catalyses the reaction D-glyceraldehyde 3-phosphate + pyruvate + H(+) = 1-deoxy-D-xylulose 5-phosphate + CO2. It functions in the pathway metabolic intermediate biosynthesis; 1-deoxy-D-xylulose 5-phosphate biosynthesis; 1-deoxy-D-xylulose 5-phosphate from D-glyceraldehyde 3-phosphate and pyruvate: step 1/1. Catalyzes the acyloin condensation reaction between C atoms 2 and 3 of pyruvate and glyceraldehyde 3-phosphate to yield 1-deoxy-D-xylulose-5-phosphate (DXP). The sequence is that of 1-deoxy-D-xylulose-5-phosphate synthase from Pseudomonas syringae pv. syringae (strain B728a).